A 236-amino-acid polypeptide reads, in one-letter code: Bax inhibitor 1 (236 aa).

Over 1–29 (MNIFDRKINFDALFKFSHITPSTQQHLKK) the chain is Cytoplasmic. Lys7 is covalently cross-linked (Glycyl lysine isopeptide (Lys-Gly) (interchain with G-Cter in ubiquitin)). The helical transmembrane segment at 30 to 50 (VYASFALCMFVAAAGAYIHVV) threads the bilayer. Over 51–52 (TH) the chain is Lumenal. The helical transmembrane segment at 53-73 (FIQAGLLSALGSLGLMIWLMA) threads the bilayer. Residues 74–86 (TPHSHETEQKRLG) lie on the Cytoplasmic side of the membrane. A helical transmembrane segment spans residues 87–107 (LLAGFAFLTGVGLGPALDLCI). Topologically, residues 108-112 (AINPS) are lumenal. The chain crosses the membrane as a helical span at residues 113-133 (ILPTAFMGTAMIFTCFTLSAL). Residues 134–139 (YARRRS) are Cytoplasmic-facing. Residues 140 to 160 (YLFLGGILMSAMSLMLLSSLG) traverse the membrane as a helical segment. The Lumenal portion of the chain corresponds to 161–166 (NLFFGS). A helical transmembrane segment spans residues 167–187 (VWLFQANLYMGLVVMCGFVLF). At 188-206 (DTQLIIEKAENGDKDYIWH) the chain is on the cytoplasmic side. Positions 207–227 (CVDLFLDFVTLFRKLMMILAM) form an intramembrane region, helical. Residues 228–236 (NEKDKKKKK) are Cytoplasmic-facing.

Belongs to the BI1 family. Interacts with BCL2 and BCL2L1. Interacts with ERN1. Ubiquitinated by BFAR, leading to proteasomal degradation.

It is found in the endoplasmic reticulum membrane. Functionally, endoplasmic reticulum (ER)-resident protein that confers cellular protection as an anti-apoptotic protein by limiting multiple stress-inducing pathways surrounding the endoplasmic reticulum and mitochondria. Inhibits the activities of the key sensor for the endoplasmic reticulum unfolded protein response IRE1alpha/ERN1 both directly and by blocking BAX/BAK binding. Modulates ER calcium homeostasis by acting as a calcium-leak channel. Negatively regulates autophagy and autophagosome formation, especially during periods of nutrient deprivation, and reduces cell survival during starvation. This Bos taurus (Bovine) protein is Bax inhibitor 1 (TMBIM6).